A 531-amino-acid chain; its full sequence is MKCHYEALGVRRDASEEELKKAYRKLALKWHPDKNLDNAAEAAEQFKLIQAAYDVLSDPQERAWYDNHREALLKGGFDGEYQDDSLDLLRYFTVTCYSGYGDDEKGFYTVYRNVFEMIAKEELESVLEEEVDDFPTFGDSQSDYDTVVHPFYAYWQSFCTQKNFAWKEEYDTRQASNRWEKRAMEKENKKIRDKARKEKNELVRQLVAFIRKRDKRVQAHRKLVEEQNAEKARKAEEMRRQQKLKQAKLVEQYREQSWMTMANLEKELQEMEARYEKEFGDGSDENEMEEHELKDEEDGKDSDEAEDAELYDDLYCPACDKSFKTEKAMKNHEKSKKHREMVALLKQQLEEEEENFSRPQIDENPLDDNSEEEMEDAPKQKLSKKQKKKKQKPAQNYDDNFNVNGPGEGVKVDPEDTNLNQDSAKELEDSPQENVSVTEIIKPCDDPKSEAKSVPKPKGKKTKDMKKPVRVPAEPQTMSVLISCTTCHSEFPSRNKLFDHLKATGHARAPSSSSLNSATSSQSKKEKRKNR.

The J domain occupies 3–69 (CHYEALGVRR…QERAWYDNHR (67 aa)). Disordered regions lie at residues 279–311 (FGDG…AELY), 327–474 (KAMK…VPAE), and 502–531 (KATG…RKNR). Positions 281–311 (DGSDENEMEEHELKDEEDGKDSDEAEDAELY) are enriched in acidic residues. 2 positions are modified to phosphoserine: serine 283 and serine 302. The C2H2-type 1 zinc-finger motif lies at 314–338 (LYCPACDKSFKTEKAMKNHEKSKKH). Over residues 364–375 (NPLDDNSEEEME) the composition is skewed to acidic residues. Phosphoserine is present on serine 370. The segment covering 381–392 (KLSKKQKKKKQK) has biased composition (basic residues). The segment covering 393-403 (PAQNYDDNFNV) has biased composition (polar residues). Residues 442–453 (KPCDDPKSEAKS) are compositionally biased toward basic and acidic residues. Residues 455–464 (PKPKGKKTKD) show a composition bias toward basic residues. The C2H2-type 2 zinc-finger motif lies at 482-506 (ISCTTCHSEFPSRNKLFDHLKATGH). Phosphoserine is present on serine 511. Over residues 511-522 (SSSSLNSATSSQ) the composition is skewed to low complexity.

Interacts with HSPA8, PA2G4 and ZNF622. Expressed in brain, placenta, kidney and pancreas.

It is found in the cytoplasm. Its subcellular location is the nucleus. The protein localises to the nucleolus. In terms of biological role, may act as a co-chaperone for HSP70. May play a role in ribosomal RNA (rRNA) biogenesis, possibly in the maturation of the 60S subunit. Binds the precursor 45S rRNA. The protein is DnaJ homolog subfamily C member 21 (DNAJC21) of Homo sapiens (Human).